Here is a 369-residue protein sequence, read N- to C-terminus: Glutamine synthetase (369 aa).

The 80-residue stretch at 23–102 (VIAEYIWVDS…VLAECWNNDG (80 aa)) folds into the GS beta-grasp domain. The region spanning 109 to 369 (HRHEAAKLFE…MSKEFERESS (261 aa)) is the GS catalytic domain.

Belongs to the glutamine synthetase family. In terms of assembly, homooctamer.

Its subcellular location is the cytoplasm. The enzyme catalyses L-glutamate + NH4(+) + ATP = L-glutamine + ADP + phosphate + H(+). The protein is Glutamine synthetase (GLN1) of Eremothecium gossypii (strain ATCC 10895 / CBS 109.51 / FGSC 9923 / NRRL Y-1056) (Yeast).